The following is a 543-amino-acid chain: ABC transport system permease protein p69 (543 aa).

The next 12 helical transmembrane spans lie at Ile18–Ile38, Ala78–Trp98, Ile115–Phe135, Ala141–Phe161, Thr211–Ile231, Leu237–Phe257, Ile288–Ile308, Ile354–Leu374, Phe379–Phe399, Ile413–Phe433, Leu482–Glu502, and Gly510–Val530. In terms of domain architecture, ABC transmembrane type-1 spans Leu74–Val256.

The protein belongs to the binding-protein-dependent transport system permease family.

The protein localises to the cell membrane. Functionally, probably part of a high-affinity transport system. The chain is ABC transport system permease protein p69 (p69) from Mycoplasma genitalium (strain ATCC 33530 / DSM 19775 / NCTC 10195 / G37) (Mycoplasmoides genitalium).